The sequence spans 127 residues: Large ribosomal subunit protein eL22x (127 aa).

This sequence belongs to the eukaryotic ribosomal protein eL22 family.

The chain is Large ribosomal subunit protein eL22x (RPL22A) from Arabidopsis thaliana (Mouse-ear cress).